The chain runs to 221 residues: Thiamine-phosphate synthase (221 aa).

Residues 46 to 50 (QFREK) and N82 contribute to the 4-amino-2-methyl-5-(diphosphooxymethyl)pyrimidine site. Residues D83 and D102 each contribute to the Mg(2+) site. 4-amino-2-methyl-5-(diphosphooxymethyl)pyrimidine is bound at residue S121. 148 to 150 (TQS) serves as a coordination point for 2-[(2R,5Z)-2-carboxy-4-methylthiazol-5(2H)-ylidene]ethyl phosphate. Position 151 (K151) interacts with 4-amino-2-methyl-5-(diphosphooxymethyl)pyrimidine. Residues G180 and 200-201 (IS) contribute to the 2-[(2R,5Z)-2-carboxy-4-methylthiazol-5(2H)-ylidene]ethyl phosphate site.

This sequence belongs to the thiamine-phosphate synthase family. Requires Mg(2+) as cofactor.

It catalyses the reaction 2-[(2R,5Z)-2-carboxy-4-methylthiazol-5(2H)-ylidene]ethyl phosphate + 4-amino-2-methyl-5-(diphosphooxymethyl)pyrimidine + 2 H(+) = thiamine phosphate + CO2 + diphosphate. The catalysed reaction is 2-(2-carboxy-4-methylthiazol-5-yl)ethyl phosphate + 4-amino-2-methyl-5-(diphosphooxymethyl)pyrimidine + 2 H(+) = thiamine phosphate + CO2 + diphosphate. It carries out the reaction 4-methyl-5-(2-phosphooxyethyl)-thiazole + 4-amino-2-methyl-5-(diphosphooxymethyl)pyrimidine + H(+) = thiamine phosphate + diphosphate. It functions in the pathway cofactor biosynthesis; thiamine diphosphate biosynthesis; thiamine phosphate from 4-amino-2-methyl-5-diphosphomethylpyrimidine and 4-methyl-5-(2-phosphoethyl)-thiazole: step 1/1. In terms of biological role, condenses 4-methyl-5-(beta-hydroxyethyl)thiazole monophosphate (THZ-P) and 2-methyl-4-amino-5-hydroxymethyl pyrimidine pyrophosphate (HMP-PP) to form thiamine monophosphate (TMP). The sequence is that of Thiamine-phosphate synthase from Pasteurella multocida (strain Pm70).